The primary structure comprises 201 residues: FMN-dependent NADH:quinone oxidoreductase (201 aa).

Residues S9 and 16 to 18 (SYS) contribute to the FMN site.

Belongs to the azoreductase type 1 family. Homodimer. The cofactor is FMN.

The enzyme catalyses 2 a quinone + NADH + H(+) = 2 a 1,4-benzosemiquinone + NAD(+). The catalysed reaction is N,N-dimethyl-1,4-phenylenediamine + anthranilate + 2 NAD(+) = 2-(4-dimethylaminophenyl)diazenylbenzoate + 2 NADH + 2 H(+). Quinone reductase that provides resistance to thiol-specific stress caused by electrophilic quinones. Its function is as follows. Also exhibits azoreductase activity. Catalyzes the reductive cleavage of the azo bond in aromatic azo compounds to the corresponding amines. This is FMN-dependent NADH:quinone oxidoreductase from Mesomycoplasma hyopneumoniae (strain 7448) (Mycoplasma hyopneumoniae).